The chain runs to 315 residues: Calumenin (315 aa).

Positions 1–19 (MDLRQFLMCLSLCTAFALS) are cleaved as a signal peptide. Ser44 is modified (phosphoserine). The residue at position 47 (Tyr47) is a Phosphotyrosine. Thr65 is modified (phosphothreonine). EF-hand domains lie at 68–103 (ESKE…AQKR), 104–139 (WIYE…YVLD), 151–186 (QMMV…EEYD), 188–223 (MKDI…HDGN), 229–264 (WVKT…SDYD), and 265–300 (HAEA…FVGS). Ser69 is subject to Phosphoserine; by FAM20C. 8 residues coordinate Ca(2+): Asp81, Asp83, Asp85, Glu92, Asp117, Asn119, Asp121, and Glu128. Residue Asn131 is glycosylated (N-linked (GlcNAc...) (complex) asparagine). Asp164 contacts Ca(2+). Lys165 carries the N6-acetyllysine modification. Ca(2+)-binding residues include Asp166, Asp168, Glu175, Asp201, Asn203, Asp205, Glu212, Asp242, Asn244, Asp246, Lys248, and Glu253. Thr254 bears the Phosphothreonine mark. A phosphoserine mark is found at Ser261 and Ser277. Residues Asp278, Asn280, Asp282, Lys284, and Glu289 each coordinate Ca(2+). The Prevents secretion from ER motif lies at 312–315 (HDEF).

The protein belongs to the CREC family. As to quaternary structure, interacts with GGCX. In terms of tissue distribution, ubiquitously expressed. Expressed at high levels in heart, placenta and skeletal muscle, at lower levels in lung, kidney and pancreas and at very low levels in brain and liver.

The protein localises to the endoplasmic reticulum membrane. Its subcellular location is the golgi apparatus. It is found in the secreted. The protein resides in the melanosome. It localises to the sarcoplasmic reticulum lumen. In terms of biological role, involved in regulation of vitamin K-dependent carboxylation of multiple N-terminal glutamate residues. Seems to inhibit gamma-carboxylase GGCX. Binds 7 calcium ions with a low affinity. This Homo sapiens (Human) protein is Calumenin (CALU).